The following is a 203-amino-acid chain: Glycerol-3-phosphate acyltransferase (203 aa).

The next 6 helical transmembrane spans lie at 3-23, 51-71, 74-94, 116-136, 140-160, and 164-178; these read ILLA…VVVS, KAAI…VWLV, FGIG…LGHL, AVHP…AFFF, SLAA…LFGT, and PVAW…LLIW.

This sequence belongs to the PlsY family. As to quaternary structure, probably interacts with PlsX.

The protein localises to the cell inner membrane. It carries out the reaction an acyl phosphate + sn-glycerol 3-phosphate = a 1-acyl-sn-glycero-3-phosphate + phosphate. It functions in the pathway lipid metabolism; phospholipid metabolism. Functionally, catalyzes the transfer of an acyl group from acyl-phosphate (acyl-PO(4)) to glycerol-3-phosphate (G3P) to form lysophosphatidic acid (LPA). This enzyme utilizes acyl-phosphate as fatty acyl donor, but not acyl-CoA or acyl-ACP. The chain is Glycerol-3-phosphate acyltransferase from Burkholderia mallei (strain ATCC 23344).